Reading from the N-terminus, the 130-residue chain is YopE regulator (130 aa).

Functionally, positive regulator of YopE. The chain is YopE regulator (yerA) from Yersinia enterocolitica serotype O:8 / biotype 1B (strain NCTC 13174 / 8081).